The chain runs to 272 residues: MVLLTAVLLLLAAYAGPAQSLGSFVHCEPCDEKALSMCPPSPLGCELVKEPGCGCCMTCALAEGQSCGVYTERCAQGLRCLPRQDEEKPLHALLHGRGVCLNEKSYREQVKIERDSREHEEPTTSEMAEETYSPKIFRPKHTRISELKAEAVKKDRRKKLTQSKFVGGAENTAHPRIISAPEMRQESEQGPCRRHMEASLQELKASPRMVPRAVYLPNCDRKGFYKRKQCKPSRGRKRGICWCVDKYGMKLPGMEYVDGDFQCHTFDSSNVE.

Positions 1-20 are cleaved as a signal peptide; sequence MVLLTAVLLLLAAYAGPAQS. Residues 23 to 103 form the IGFBP N-terminal domain; the sequence is SFVHCEPCDE…LHGRGVCLNE (81 aa). Disulfide bonds link C27/C53, C30/C55, C38/C56, C45/C59, C67/C80, and C74/C100. The span at 111-122 shows a compositional bias: basic and acidic residues; it reads KIERDSREHEEP. Residues 111-130 are disordered; the sequence is KIERDSREHEEPTTSEMAEE. Position 116 is a phosphoserine; by FAM20C (S116). T172 is a glycosylation site (O-linked (HexNAc...) threonine). One can recognise a Thyroglobulin type-1 domain in the interval 189–263; that stretch reads QGPCRRHMEA…MEYVDGDFQC (75 aa). 3 disulfide bridges follow: C192/C219, C230/C241, and C243/C263.

Interacts with IGF1; this interaction enhances the growth stimulatory effects of IGF1 on fibroblasts. Interacts with CAV1; this interaction allows trafficking of IGFBP5 from the plasma membrane to the nucleus. Interacts with NCL; this interaction is necessary for IGFBP5 localization to the nucleus. Post-translationally, cleaved by C1S in extracellular space. In terms of tissue distribution, osteosarcoma, and at lower levels in liver, kidney and brain.

Its subcellular location is the secreted. It is found in the cytoplasm. The protein localises to the nucleus. Its function is as follows. Multifunctional protein that plays a critical role in regulating the availability of IGFs to their receptors and thereby regulates IGF-mediated cellular processes including proliferation, differentiation, and apoptosis in a cell-type specific manner. Increases the cell proliferation of osteoblasts, intestinal smooth muscle cells and neuroblastoma cells. Enhances adhesion and survival of epithelial cells but decreases adhesion of mesenchymal cells. Once secreted, acts as a major mediator of mTORC1-dependent feedback inhibition of IGF1 signaling. Also plays a role in the induction of extracellular matrix (ECM) production and deposition independently of its nuclear translocation and binding to IGFs. Acts itself as a growth factor that can act independently of IGFs to regulate bone formation. Acts as a ligand for the ROR1 receptor which triggers formation of ROR1/HER2 heterodimer to enhance CREB oncogenic signaling. This is Insulin-like growth factor-binding protein 5 (IGFBP5) from Homo sapiens (Human).